Here is a 98-residue protein sequence, read N- to C-terminus: Large ribosomal subunit protein mL53 (98 aa).

This sequence belongs to the mitochondrion-specific ribosomal protein mL53 family. As to quaternary structure, component of the mitochondrial large ribosomal subunit (mt-LSU). Mature yeast 74S mitochondrial ribosomes consist of a small (37S) and a large (54S) subunit. The 37S small subunit contains a 15S ribosomal RNA (15S mt-rRNA) and 34 different proteins. The 54S large subunit contains a 21S rRNA (21S mt-rRNA) and 46 different proteins.

It is found in the mitochondrion. In terms of biological role, component of the mitochondrial ribosome (mitoribosome), a dedicated translation machinery responsible for the synthesis of mitochondrial genome-encoded proteins, including at least some of the essential transmembrane subunits of the mitochondrial respiratory chain. The mitoribosomes are attached to the mitochondrial inner membrane and translation products are cotranslationally integrated into the membrane. In Saccharomyces cerevisiae (strain ATCC 204508 / S288c) (Baker's yeast), this protein is Large ribosomal subunit protein mL53 (MRPL44).